Here is a 133-residue protein sequence, read N- to C-terminus: ATP synthase epsilon chain, chloroplastic (133 aa).

The protein belongs to the ATPase epsilon chain family. F-type ATPases have 2 components, CF(1) - the catalytic core - and CF(0) - the membrane proton channel. CF(1) has five subunits: alpha(3), beta(3), gamma(1), delta(1), epsilon(1). CF(0) has three main subunits: a, b and c.

The protein localises to the plastid. It is found in the chloroplast thylakoid membrane. Produces ATP from ADP in the presence of a proton gradient across the membrane. This Gossypium barbadense (Sea Island cotton) protein is ATP synthase epsilon chain, chloroplastic.